The chain runs to 352 residues: 3-isopropylmalate dehydrogenase (352 aa).

Position 76–89 (76–89 (GPKWENLPHEHKPE)) interacts with NAD(+). Substrate-binding residues include Arg-96, Arg-106, Arg-134, and Asp-219. Mg(2+) contacts are provided by Asp-219, Asp-243, and Asp-247. 276–288 (GSAPDIAGQNKAN) contributes to the NAD(+) binding site.

This sequence belongs to the isocitrate and isopropylmalate dehydrogenases family. LeuB type 1 subfamily. In terms of assembly, homodimer. The cofactor is Mg(2+). Mn(2+) is required as a cofactor.

The protein resides in the cytoplasm. It carries out the reaction (2R,3S)-3-isopropylmalate + NAD(+) = 4-methyl-2-oxopentanoate + CO2 + NADH. Its pathway is amino-acid biosynthesis; L-leucine biosynthesis; L-leucine from 3-methyl-2-oxobutanoate: step 3/4. Functionally, catalyzes the oxidation of 3-carboxy-2-hydroxy-4-methylpentanoate (3-isopropylmalate) to 3-carboxy-4-methyl-2-oxopentanoate. The product decarboxylates to 4-methyl-2 oxopentanoate. The protein is 3-isopropylmalate dehydrogenase of Chlorobium chlorochromatii (strain CaD3).